The following is a 503-amino-acid chain: Cytochrome P450 11B1, mitochondrial (503 aa).

A mitochondrion-targeting transit peptide spans 1 to 24 (MALRAKAEVCMAVPWLSLQRAQAL). C450 contacts heme.

This sequence belongs to the cytochrome P450 family. Heme serves as cofactor. Expressed in the zona fasciculata/reticularis of the adrenal cortex.

It localises to the mitochondrion inner membrane. It carries out the reaction a steroid + 2 reduced [adrenodoxin] + O2 + 2 H(+) = an 11beta-hydroxysteroid + 2 oxidized [adrenodoxin] + H2O. It catalyses the reaction 11-deoxycortisol + 2 reduced [adrenodoxin] + O2 + 2 H(+) = cortisol + 2 oxidized [adrenodoxin] + H2O. The catalysed reaction is 21-hydroxyprogesterone + 2 reduced [adrenodoxin] + O2 + 2 H(+) = corticosterone + 2 oxidized [adrenodoxin] + H2O. The protein operates within steroid biosynthesis; glucocorticoid biosynthesis. It participates in steroid hormone biosynthesis. Its function is as follows. A cytochrome P450 monooxygenase involved in the biosynthesis of adrenal corticoids. Catalyzes a variety of reactions that are essential for many species, including detoxification, defense, and the formation of endogenous chemicals like steroid hormones. Steroid 11beta, 18- and 19-hydroxylase with preferred regioselectivity at 11beta, then 18, and lastly 19. Catalyzes the hydroxylation of 11-deoxycortisol and 11-deoxycorticosterone (21-hydroxyprogesterone) at 11beta position, yielding cortisol or corticosterone, respectively, but cannot produce aldosterone. Mechanistically, uses molecular oxygen inserting one oxygen atom into a substrate for hydroxylation and reducing the second into a water molecule. Two electrons are provided by NADPH via a two-protein mitochondrial transfer system comprising flavoprotein FDXR (adrenodoxin/ferredoxin reductase) and nonheme iron-sulfur protein FDX1 or FDX2 (adrenodoxin/ferredoxin). Due to its lack of 18-oxidation activity, it is incapable of generating aldosterone. Could also be involved in the androgen metabolic pathway. The protein is Cytochrome P450 11B1, mitochondrial of Homo sapiens (Human).